A 468-amino-acid polypeptide reads, in one-letter code: 3-isopropylmalate dehydratase large subunit (468 aa).

[4Fe-4S] cluster is bound by residues Cys-349, Cys-409, and Cys-412.

It belongs to the aconitase/IPM isomerase family. LeuC type 1 subfamily. As to quaternary structure, heterodimer of LeuC and LeuD. Requires [4Fe-4S] cluster as cofactor.

The catalysed reaction is (2R,3S)-3-isopropylmalate = (2S)-2-isopropylmalate. The protein operates within amino-acid biosynthesis; L-leucine biosynthesis; L-leucine from 3-methyl-2-oxobutanoate: step 2/4. Catalyzes the isomerization between 2-isopropylmalate and 3-isopropylmalate, via the formation of 2-isopropylmaleate. This is 3-isopropylmalate dehydratase large subunit from Nitrobacter winogradskyi (strain ATCC 25391 / DSM 10237 / CIP 104748 / NCIMB 11846 / Nb-255).